A 273-amino-acid polypeptide reads, in one-letter code: Shikimate dehydrogenase (NADP(+)) (273 aa).

Residues 14–16 (SKS) and threonine 61 contribute to the shikimate site. Lysine 65 serves as the catalytic Proton acceptor. Residue aspartate 77 coordinates NADP(+). Shikimate is bound by residues asparagine 86 and aspartate 102. Residues 126-130 (GAGGA), 150-155 (NRTYEK), and methionine 213 contribute to the NADP(+) site. Tyrosine 215 contributes to the shikimate binding site. Glycine 237 is an NADP(+) binding site.

The protein belongs to the shikimate dehydrogenase family. In terms of assembly, homodimer.

The enzyme catalyses shikimate + NADP(+) = 3-dehydroshikimate + NADPH + H(+). Its pathway is metabolic intermediate biosynthesis; chorismate biosynthesis; chorismate from D-erythrose 4-phosphate and phosphoenolpyruvate: step 4/7. Functionally, involved in the biosynthesis of the chorismate, which leads to the biosynthesis of aromatic amino acids. Catalyzes the reversible NADPH linked reduction of 3-dehydroshikimate (DHSA) to yield shikimate (SA). This is Shikimate dehydrogenase (NADP(+)) from Aliivibrio salmonicida (strain LFI1238) (Vibrio salmonicida (strain LFI1238)).